A 435-amino-acid chain; its full sequence is Adenylosuccinate synthetase (435 aa).

GTP-binding positions include 17 to 23 and 47 to 49; these read GDEGKGK and GHT. Asp-18 acts as the Proton acceptor in catalysis. The Mg(2+) site is built by Asp-18 and Gly-47. Residues 18 to 21, 45 to 48, Thr-138, Arg-152, Asn-232, Thr-247, and Arg-311 contribute to the IMP site; these read DEGK and NAGH. The active-site Proton donor is the His-48. 307-313 lines the substrate pocket; it reads VTTGRKR. GTP is bound by residues Arg-313, 339-341, and 421-423; these read KLD and GVG.

This sequence belongs to the adenylosuccinate synthetase family. Homodimer. Mg(2+) is required as a cofactor.

The protein resides in the cytoplasm. The catalysed reaction is IMP + L-aspartate + GTP = N(6)-(1,2-dicarboxyethyl)-AMP + GDP + phosphate + 2 H(+). Its pathway is purine metabolism; AMP biosynthesis via de novo pathway; AMP from IMP: step 1/2. Plays an important role in the de novo pathway and in the salvage pathway of purine nucleotide biosynthesis. Catalyzes the first committed step in the biosynthesis of AMP from IMP. This chain is Adenylosuccinate synthetase, found in Caenorhabditis briggsae.